The sequence spans 252 residues: Pyrroloquinoline-quinone synthase (252 aa).

This sequence belongs to the PqqC family.

The enzyme catalyses 6-(2-amino-2-carboxyethyl)-7,8-dioxo-1,2,3,4,7,8-hexahydroquinoline-2,4-dicarboxylate + 3 O2 = pyrroloquinoline quinone + 2 H2O2 + 2 H2O + H(+). The protein operates within cofactor biosynthesis; pyrroloquinoline quinone biosynthesis. Ring cyclization and eight-electron oxidation of 3a-(2-amino-2-carboxyethyl)-4,5-dioxo-4,5,6,7,8,9-hexahydroquinoline-7,9-dicarboxylic-acid to PQQ. The sequence is that of Pyrroloquinoline-quinone synthase from Acinetobacter baumannii (strain ACICU).